The chain runs to 70 residues: Omega-conotoxin-like Bu1 (70 aa).

Residues 1 to 22 form the signal peptide; that stretch reads MKLTCVAIVAVLLLTACQLITA. The propeptide occupies 23–45; it reads EDSRGTQLHRALRKTTKLSVSTR. 3 cysteine pairs are disulfide-bonded: Cys46-Cys61, Cys53-Cys65, and Cys60-Cys70.

The protein belongs to the conotoxin O1 superfamily. As to expression, expressed by the venom duct.

The protein resides in the secreted. Functionally, omega-conotoxins act at presynaptic membranes, they bind and block voltage-gated calcium channels (Cav). This is Omega-conotoxin-like Bu1 from Conus bullatus (Bubble cone).